A 263-amino-acid polypeptide reads, in one-letter code: Putative SNAP25 homologous protein SNAP30 (263 aa).

Disordered stretches follow at residues 1 to 61 (MFGF…LQSQ) and 132 to 209 (NLGG…DGLS). 2 stretches are compositionally biased toward polar residues: residues 8 to 34 (PGNNKLPNESSNNKGGTITAGRRTSSE) and 52 to 61 (FNDSGGLQSQ). A compositionally biased stretch (basic and acidic residues) spans 158–173 (KPSKKSENHKEEREKL). Over residues 180–194 (RSSSQPALDQPTNAL) the composition is skewed to polar residues. Over residues 197 to 206 (VEQEKAKQDD) the composition is skewed to basic and acidic residues. In terms of domain architecture, t-SNARE coiled-coil homology spans 198 to 260 (EQEKAKQDDG…QGANQRARHL (63 aa)).

It belongs to the SNAP-25 family.

Its subcellular location is the membrane. It is found in the cytoplasm. Its function is as follows. Vesicle trafficking protein that functions in the secretory pathway. This chain is Putative SNAP25 homologous protein SNAP30 (SNAP30), found in Arabidopsis thaliana (Mouse-ear cress).